A 154-amino-acid chain; its full sequence is Myoglobin (154 aa).

Residues 1 to 147 (MADVKKNCLA…FNDECQHQLA (147 aa)) form the Globin domain. Histidine 96 serves as a coordination point for heme b.

The protein belongs to the globin family.

The protein resides in the cytoplasm. The polypeptide is Myoglobin (GLBB) (Nippostrongylus brasiliensis (Rat hookworm)).